The following is a 1194-amino-acid chain: Cohesin subunit SA-2 (1194 aa).

One can recognise an SCD domain in the interval 224–309 (FVHRYRDAIA…SRFKDRIVSM (86 aa)). A disordered region spans residues 986–1027 (DTMSVMSGMSGRGSSTRSKKIKPPTGKRKLPEAEESSSSDSM). Positions 988 to 1001 (MSVMSGMSGRGSST) are enriched in low complexity. A compositionally biased stretch (basic residues) spans 1002–1013 (RSKKIKPPTGKR).

The protein belongs to the SCC3 family. In terms of assembly, part of the cohesin complex which is composed of a heterodimer between a SMC1 protein (SMC1A or SMC1B) and SMC3, which are attached via their hinge domain, and RAD21 which link them at their heads, and one STAG protein (STAG1, STAG2 or STAG3). In cohesin complexes, STAG2 is mutually exclusive with STAG1 and STAG3. Interacts directly with RAD21 in cohesin complex. Phosphorylated by PLK1. The large dissociation of cohesin from chromosome arms during prophase is partly due to its phosphorylation.

Its subcellular location is the nucleus. It is found in the chromosome. The protein resides in the centromere. In terms of biological role, component of cohesin complex, a complex required for the cohesion of sister chromatids after DNA replication. The cohesin complex apparently forms a large proteinaceous ring within which sister chromatids can be trapped. At anaphase, the complex is cleaved and dissociates from chromatin, allowing sister chromatids to segregate. The cohesin complex may also play a role in spindle pole assembly during mitosis. This chain is Cohesin subunit SA-2 (stag2), found in Xenopus laevis (African clawed frog).